Consider the following 109-residue polypeptide: Prefoldin subunit 1 (109 aa).

The residue at position 2 (Ser-2) is an N-acetylserine.

This sequence belongs to the prefoldin subunit beta family. In terms of assembly, heterohexamer of two PFD-alpha type and four PFD-beta type subunits.

It is found in the cytoplasm. Functionally, binds specifically to cytosolic chaperonin (c-CPN) and transfers target proteins to it. Binds to nascent polypeptide chain and promotes folding in an environment in which there are many competing pathways for nonnative proteins. This is Prefoldin subunit 1 (PFD1) from Saccharomyces cerevisiae (strain ATCC 204508 / S288c) (Baker's yeast).